The chain runs to 937 residues: AP-2 complex subunit beta (937 aa).

An N-acetylthreonine modification is found at threonine 2. The residue at position 4 (serine 4) is a Phosphoserine. Lysine 265 carries the N6-acetyllysine modification. Phosphotyrosine occurs at positions 737 and 928.

Belongs to the adaptor complexes large subunit family. In terms of assembly, adapter protein complex 2 (AP-2) is a heterotetramer composed of two large adaptins (alpha-type subunit AP2A1 or AP2A2 and beta-type subunit AP2B1), a medium adaptin (mu-type subunit AP2M1) and a small adaptin (sigma-type subunit AP2S1). Interacts with EPN1. Interacts with EPS15; clathrin competes with EPS15. Interacts with SNAP91; clathrin competes with SNAP91. Interacts with CLTC; clathrin competes with EPS15, SNAP91 and PIP5K1C. Interacts with LDLRAP1. Interacts with AMPH and BIN1. Interacts with ARF6 (GDP-bound). Interacts (dephosphorylated at Tyr-737) with ARRB1; phosphorylation of AP2B1 at Tyr-737 disrupts the interaction. Interacts with SLC2A8. Interacts with SCYL1 and SCYL2. Interacts with TGFBR1 and TGFBR2. Interacts with PIP5K1C; clathrin competes with PIP5K1C. Interacts with DENND1B. Interacts with FCHO1. Interacts with RFTN1. Interacts with KIAA1107. Together with AP2A1 or AP2A2 and AP2M1, it interacts with ADAM10; this interaction facilitates ADAM10 endocytosis from the plasma membrane during long-term potentiation in hippocampal neurons. The N-terminus is blocked. In terms of processing, phosphorylation at Tyr-737 by SRC occurs at the plasma membrane in clathrin-coated vesicles (CCVs).

The protein resides in the cell membrane. It localises to the membrane. It is found in the coated pit. Functionally, component of the adaptor protein complex 2 (AP-2). Adaptor protein complexes function in protein transport via transport vesicles in different membrane traffic pathways. Adaptor protein complexes are vesicle coat components and appear to be involved in cargo selection and vesicle formation. AP-2 is involved in clathrin-dependent endocytosis in which cargo proteins are incorporated into vesicles surrounded by clathrin (clathrin-coated vesicles, CCVs) which are destined for fusion with the early endosome. The clathrin lattice serves as a mechanical scaffold but is itself unable to bind directly to membrane components. Clathrin-associated adaptor protein (AP) complexes which can bind directly to both the clathrin lattice and to the lipid and protein components of membranes are considered to be the major clathrin adaptors contributing the CCV formation. AP-2 also serves as a cargo receptor to selectively sort the membrane proteins involved in receptor-mediated endocytosis. AP-2 seems to play a role in the recycling of synaptic vesicle membranes from the presynaptic surface. AP-2 recognizes Y-X-X-[FILMV] (Y-X-X-Phi) and [ED]-X-X-X-L-[LI] endocytosis signal motifs within the cytosolic tails of transmembrane cargo molecules. AP-2 may also play a role in maintaining normal post-endocytic trafficking through the ARF6-regulated, non-clathrin pathway. During long-term potentiation in hippocampal neurons, AP-2 is responsible for the endocytosis of ADAM10. The AP-2 beta subunit acts via its C-terminal appendage domain as a scaffolding platform for endocytic accessory proteins; at least some clathrin-associated sorting proteins (CLASPs) are recognized by their [DE]-X(1,2)-F-X-X-[FL]-X-X-X-R motif. The AP-2 beta subunit binds to clathrin heavy chain, promoting clathrin lattice assembly; clathrin displaces at least some CLASPs from AP2B1 which probably then can be positioned for further coat assembly. This is AP-2 complex subunit beta (AP2B1) from Bos taurus (Bovine).